A 187-amino-acid polypeptide reads, in one-letter code: Phosphatidylethanolamine-binding protein 1 (187 aa).

Phosphoserine occurs at positions 6 and 13. Threonine 42 bears the Phosphothreonine mark. Serine 52, serine 54, serine 98, and serine 153 each carry phosphoserine. The segment at 93–134 (KGNDISSGTVLSDYVGSGPPKGTGLHRYVWLVYEQDRPLKCD) is interaction with RAF1.

The protein belongs to the phosphatidylethanolamine-binding protein family. In terms of assembly, has a tendency to form dimers by disulfide cross-linking. Interacts with RAF1 and this interaction is enhanced if RAF1 is phosphorylated on residues 'Ser-338', 'Ser-339', 'Tyr-340' and 'Tyr-341'. Interacts with ALOX15; in response to IL13/interleukin-13, prevents the interaction of PEBP1 with RAF1 to activate the ERK signaling cascade.

Its subcellular location is the cytoplasm. Its function is as follows. Binds ATP, opioids and phosphatidylethanolamine. Has lower affinity for phosphatidylinositol and phosphatidylcholine. Serine protease inhibitor which inhibits thrombin, neuropsin and chymotrypsin but not trypsin, tissue type plasminogen activator and elastase. Inhibits the kinase activity of RAF1 by inhibiting its activation and by dissociating the RAF1/MEK complex and acting as a competitive inhibitor of MEK phosphorylation. Functionally, HCNP may be involved in the function of the presynaptic cholinergic neurons of the central nervous system. HCNP increases the production of choline acetyltransferase but not acetylcholinesterase. Seems to be mediated by a specific receptor. This chain is Phosphatidylethanolamine-binding protein 1 (PEBP1), found in Pongo abelii (Sumatran orangutan).